Here is a 610-residue protein sequence, read N- to C-terminus: Glutamine--fructose-6-phosphate aminotransferase [isomerizing] (610 aa).

Catalysis depends on cysteine 2, which acts as the Nucleophile; for GATase activity. One can recognise a Glutamine amidotransferase type-2 domain in the interval 2–221 (CGIVGAVAQR…DGDVVDLQLA (220 aa)). SIS domains follow at residues 286–426 (AYKV…TRGR) and 459–600 (WADR…VDKP). Lysine 605 functions as the For Fru-6P isomerization activity in the catalytic mechanism.

Homodimer.

The protein resides in the cytoplasm. The catalysed reaction is D-fructose 6-phosphate + L-glutamine = D-glucosamine 6-phosphate + L-glutamate. Catalyzes the first step in hexosamine metabolism, converting fructose-6P into glucosamine-6P using glutamine as a nitrogen source. This Bordetella pertussis (strain Tohama I / ATCC BAA-589 / NCTC 13251) protein is Glutamine--fructose-6-phosphate aminotransferase [isomerizing].